Here is a 160-residue protein sequence, read N- to C-terminus: Putative 4-hydroxy-4-methyl-2-oxoglutarate aldolase (160 aa).

Residues glycine 75–leucine 78 and arginine 97 each bind substrate. Residue aspartate 98 participates in a divalent metal cation binding.

This sequence belongs to the class II aldolase/RraA-like family. In terms of assembly, homotrimer. The cofactor is a divalent metal cation.

The catalysed reaction is 4-hydroxy-4-methyl-2-oxoglutarate = 2 pyruvate. The enzyme catalyses oxaloacetate + H(+) = pyruvate + CO2. Catalyzes the aldol cleavage of 4-hydroxy-4-methyl-2-oxoglutarate (HMG) into 2 molecules of pyruvate. Also contains a secondary oxaloacetate (OAA) decarboxylase activity due to the common pyruvate enolate transition state formed following C-C bond cleavage in the retro-aldol and decarboxylation reactions. This chain is Putative 4-hydroxy-4-methyl-2-oxoglutarate aldolase, found in Vibrio vulnificus (strain YJ016).